A 266-amino-acid chain; its full sequence is DNA-directed RNA polymerase subunit Rpo3 (266 aa).

3 residues coordinate [3Fe-4S] cluster: C205, C208, and C211.

This sequence belongs to the archaeal Rpo3/eukaryotic RPB3 RNA polymerase subunit family. In terms of assembly, part of the RNA polymerase complex. [3Fe-4S] cluster serves as cofactor.

Its subcellular location is the cytoplasm. It catalyses the reaction RNA(n) + a ribonucleoside 5'-triphosphate = RNA(n+1) + diphosphate. Its function is as follows. DNA-dependent RNA polymerase (RNAP) catalyzes the transcription of DNA into RNA using the four ribonucleoside triphosphates as substrates. The polypeptide is DNA-directed RNA polymerase subunit Rpo3 (Methanosarcina acetivorans (strain ATCC 35395 / DSM 2834 / JCM 12185 / C2A)).